Here is a 322-residue protein sequence, read N- to C-terminus: Undecaprenyl-phosphate 4-deoxy-4-formamido-L-arabinose transferase (322 aa).

Residues 1–235 lie on the Cytoplasmic side of the membrane; sequence MFEIHPVKKV…TCLTTTPLRM (235 aa). Residues 236-256 form a helical membrane-spanning segment; it reads LSLLGSIIAIGGFSIAVLLVI. Over 257 to 269 the chain is Periplasmic; the sequence is LRLTFGPQWAAEG. A helical membrane pass occupies residues 270–290; it reads VFMLFAVLFTFIGAQFIGMGL. Over 291-322 the chain is Cytoplasmic; it reads LGEYIGRIYTDVRARPRYFVQQVIRPSSKENE.

It belongs to the glycosyltransferase 2 family.

Its subcellular location is the cell inner membrane. The catalysed reaction is UDP-4-deoxy-4-formamido-beta-L-arabinose + di-trans,octa-cis-undecaprenyl phosphate = 4-deoxy-4-formamido-alpha-L-arabinopyranosyl di-trans,octa-cis-undecaprenyl phosphate + UDP. Its pathway is glycolipid biosynthesis; 4-amino-4-deoxy-alpha-L-arabinose undecaprenyl phosphate biosynthesis; 4-amino-4-deoxy-alpha-L-arabinose undecaprenyl phosphate from UDP-4-deoxy-4-formamido-beta-L-arabinose and undecaprenyl phosphate: step 1/2. It functions in the pathway bacterial outer membrane biogenesis; lipopolysaccharide biosynthesis. Functionally, catalyzes the transfer of 4-deoxy-4-formamido-L-arabinose from UDP to undecaprenyl phosphate. The modified arabinose is attached to lipid A and is required for resistance to polymyxin and cationic antimicrobial peptides. The chain is Undecaprenyl-phosphate 4-deoxy-4-formamido-L-arabinose transferase from Escherichia coli O17:K52:H18 (strain UMN026 / ExPEC).